A 759-amino-acid chain; its full sequence is Phosphoribosylformylglycinamidine synthase subunit PurL (759 aa).

Residue histidine 61 is part of the active site. 2 residues coordinate ATP: tyrosine 64 and lysine 105. Mg(2+) is bound at residue glutamate 107. Substrate-binding positions include 108–111 and arginine 130; that span reads SHNH. Histidine 109 acts as the Proton acceptor in catalysis. Mg(2+) is bound at residue aspartate 131. Glutamine 260 contacts substrate. Residue aspartate 288 coordinates Mg(2+). 332–334 is a binding site for substrate; sequence ESQ. 2 residues coordinate ATP: aspartate 520 and glycine 557. Asparagine 558 contacts Mg(2+). Serine 560 lines the substrate pocket.

The protein belongs to the FGAMS family. Monomer. Part of the FGAM synthase complex composed of 1 PurL, 1 PurQ and 2 PurS subunits.

The protein localises to the cytoplasm. The catalysed reaction is N(2)-formyl-N(1)-(5-phospho-beta-D-ribosyl)glycinamide + L-glutamine + ATP + H2O = 2-formamido-N(1)-(5-O-phospho-beta-D-ribosyl)acetamidine + L-glutamate + ADP + phosphate + H(+). The protein operates within purine metabolism; IMP biosynthesis via de novo pathway; 5-amino-1-(5-phospho-D-ribosyl)imidazole from N(2)-formyl-N(1)-(5-phospho-D-ribosyl)glycinamide: step 1/2. In terms of biological role, part of the phosphoribosylformylglycinamidine synthase complex involved in the purines biosynthetic pathway. Catalyzes the ATP-dependent conversion of formylglycinamide ribonucleotide (FGAR) and glutamine to yield formylglycinamidine ribonucleotide (FGAM) and glutamate. The FGAM synthase complex is composed of three subunits. PurQ produces an ammonia molecule by converting glutamine to glutamate. PurL transfers the ammonia molecule to FGAR to form FGAM in an ATP-dependent manner. PurS interacts with PurQ and PurL and is thought to assist in the transfer of the ammonia molecule from PurQ to PurL. In Thermoplasma acidophilum (strain ATCC 25905 / DSM 1728 / JCM 9062 / NBRC 15155 / AMRC-C165), this protein is Phosphoribosylformylglycinamidine synthase subunit PurL.